The chain runs to 1665 residues: Cortactin-binding protein 2 (1665 aa).

A coiled-coil region spans residues 120-277; sequence RKMQERMSTQ…EQLKRGNDSK (158 aa). Disordered regions lie at residues 203–222, 368–480, and 500–620; these read EKKKTNELEEELSAEKRRST, VSSV…SPTS, and RFTS…PSID. 2 stretches are compositionally biased toward polar residues: residues 388-399 and 410-429; these read SIGSTPDLASST and TGQTSGIASQNYSQASSMHS. Residues 455 to 469 are compositionally biased toward low complexity; it reads QGNANDQDQNGNTTQ. The segment covering 470 to 480 has biased composition (polar residues); that stretch reads SPPSRDVSPTS. The residue at position 500 (R500) is an Asymmetric dimethylarginine. ANK repeat units lie at residues 711–741, 745–774, 778–807, 811–840, and 844–873; these read GRPTLLQQAAAQGNVTLLSMLLNEEGLDINY, DGHSALYSAAKNGHTDCVRLLLNAKAQIDA, NGFTPLCAAAAQGHFECVELLIAYHANIDH, GGQTPLYLACKNGNKECIKVLLEAGTDRSV, and DGWTPVHAAVDTGNVDSLKLLMYHRAPTLG. Residues 875–902 form a disordered region; it reads SLNEEEPEPGAFDLDQGQEGSEGTAKPV. Residues 914–944 form an ANK 6 repeat; it reads EGWTAAHIAASKGFKNCLEILCRHGGLEPER. The disordered stretch occupies residues 1447 to 1495; it reads CSKKKGENGAWRKVSTNPRKKSGRFSSPTWSKPDLGEEGTKNKTMSQPN. S1526 carries the phosphoserine modification. The interval 1575-1665 is disordered; it reads NNLRMPVSQK…KNEQVQKPNK (91 aa). 2 stretches are compositionally biased toward low complexity: residues 1590–1604 and 1623–1641; these read SSHQTTKRSTSTSKT and SQCSQNTKRSSSSSNTRQT. Polar residues predominate over residues 1656 to 1665; the sequence is KNEQVQKPNK.

As to quaternary structure, interacts with CTTN/cortactin SH3 domain. Interacts with STRN, STRN4/zinedin and MOB4/phocein; this interactions mediate the association with the STRIPAK core complex and may regulate dendritic spine distribution of the STRIPAK complex in hippocampal neurons. Activation of glutamate receptors weakens the interaction with STRN and STRN4.

Its subcellular location is the cytoplasm. It localises to the cell cortex. The protein resides in the cell projection. The protein localises to the dendritic spine. Functionally, regulates the dendritic spine distribution of CTTN/cortactin in hippocampal neurons, and thus controls dendritic spinogenesis and dendritic spine maintenance. Associates with the striatin-interacting phosphatase and kinase (STRIPAK) core complex to regulate dendritic spine distribution of the STRIPAK complex in hippocampal neurons. This chain is Cortactin-binding protein 2 (CTTNBP2), found in Dasypus novemcinctus (Nine-banded armadillo).